Reading from the N-terminus, the 364-residue chain is MSISIKDKKEELLCRLTDFTKLKGUGCKVPQAELLSLLDGIGEGIGYDCSISQTKFPDIVMIQTTDFFFPLVDDPYFQGKIACANVLSDLYSFGIEDCDNMLMLLACSTDMTAEQRQWSSKLMIQGFNDQAICAGSKVSGGQTVKNPWPIVGGVATSILKTNEFIKPVNAVPGDVLVLTKPLGTQVCVNFHQWLSKPERWEKINTITNAEECEQVFNYATLSMARLNRVGARLMKKYNAHAATDVTGFGILGHSTNLAQNQLLPIRFEIHTLPIIKHMKKLEDHLNHPFKLLKGTSAETSGGLLISMSRENAEAFCKEIYEIEKQPAWIIGDVIDQSSNYDRSKNTSIILENPKIIEVEPNTNF.

Selenocysteine 25 is an active-site residue. A non-standard amino acid (selenocysteine) is located at residue selenocysteine 25. Residues lysine 28, 46 to 48 (GYD), aspartate 66, aspartate 89, and 141 to 143 (GQT) contribute to the ATP site. Aspartate 48 lines the Mg(2+) pocket. Aspartate 89 provides a ligand contact to Mg(2+). Aspartate 244 serves as a coordination point for Mg(2+).

It belongs to the selenophosphate synthase 1 family. Class II subfamily. As to quaternary structure, homodimer. The cofactor is Mg(2+).

The enzyme catalyses hydrogenselenide + ATP + H2O = selenophosphate + AMP + phosphate + 2 H(+). In terms of biological role, synthesizes selenophosphate from selenide and ATP. This Dictyostelium discoideum (Social amoeba) protein is Selenide, water dikinase (selD).